The primary structure comprises 457 residues: Argininosuccinate lyase (457 aa).

Belongs to the lyase 1 family. Argininosuccinate lyase subfamily.

It is found in the cytoplasm. It carries out the reaction 2-(N(omega)-L-arginino)succinate = fumarate + L-arginine. The protein operates within amino-acid biosynthesis; L-arginine biosynthesis; L-arginine from L-ornithine and carbamoyl phosphate: step 3/3. The protein is Argininosuccinate lyase of Haemophilus influenzae (strain PittGG).